The sequence spans 283 residues: tRNA pseudouridine synthase B (283 aa).

The active-site Nucleophile is the Asp-38.

The protein belongs to the pseudouridine synthase TruB family. Type 1 subfamily.

The enzyme catalyses uridine(55) in tRNA = pseudouridine(55) in tRNA. Its function is as follows. Responsible for synthesis of pseudouridine from uracil-55 in the psi GC loop of transfer RNAs. The polypeptide is tRNA pseudouridine synthase B (Aster yellows witches'-broom phytoplasma (strain AYWB)).